The chain runs to 406 residues: Endoplasmic reticulum resident protein 44 (406 aa).

An N-terminal signal peptide occupies residues 1 to 29; that stretch reads MIPGIFLSLPDLRCSLLLLVTWVFTPVTA. The 109-residue stretch at 30–138 folds into the Thioredoxin domain; the sequence is EIISLDTENI…VKALADYIRQ (109 aa). Cystine bridges form between Cys189-Cys241 and Cys301-Cys318. Residues 236–285 form an interaction with ITPR1 region; it reads WIQDKCVPLVREITFENGEELTEEGLPFLILFHMKEDTESLEIFQNEVAR. The tract at residues 360-387 is disordered; that stretch reads FHHGPDPTDTAPGEEVQDVASSPPESSF. Residues 378 to 387 show a composition bias toward polar residues; sequence VASSPPESSF. A Prevents secretion from ER motif is present at residues 403-406; sequence RDEL.

Forms mixed disulfides with both ERO1A and ERO1B and cargo folding intermediates; the interactions with ERO1A and ERO1B result in their retention in the endoplasmic reticulum. Directly interacts with ITPR1 in a pH-, redox state- and calcium-dependent manner, but not with ITPR2 or ITPR3. The strength of this interaction inversely correlates with calcium concentration.

Its subcellular location is the endoplasmic reticulum lumen. Its function is as follows. Mediates thiol-dependent retention in the early secretory pathway, forming mixed disulfides with substrate proteins through its conserved CRFS motif. Inhibits the calcium channel activity of ITPR1. May have a role in the control of oxidative protein folding in the endoplasmic reticulum. Required to retain ERO1A and ERO1B in the endoplasmic reticulum. The protein is Endoplasmic reticulum resident protein 44 (ERP44) of Bos taurus (Bovine).